Here is a 234-residue protein sequence, read N- to C-terminus: ATP synthase subunit delta, chloroplastic (234 aa).

The N-terminal 47 residues, 1–47 (MASLQQTLFSLQSKLPPSSFQIARSLPLRKTFPIRINNGGNAAGARM), are a transit peptide targeting the chloroplast. Serine 48 bears the N-acetylserine mark. The N-linked (GlcNAc...) asparagine glycan is linked to asparagine 66. The residue at position 234 (threonine 234) is a Phosphothreonine.

The protein belongs to the ATPase delta chain family. F-type ATPases have 2 components, F(1) - the catalytic core - and F(0) - the membrane proton channel. F(1) has five subunits: alpha(3), beta(3), gamma(1), delta(1), epsilon(1). CF(0) has four main subunits: a(1), b(1), b'(1) and c(10-14). The alpha and beta chains form an alternating ring which encloses part of the gamma chain. F(1) is attached to F(0) by a central stalk formed by the gamma and epsilon chains, while a peripheral stalk is formed by the delta, b and b' chains.

The protein localises to the plastid. Its subcellular location is the chloroplast thylakoid membrane. Its function is as follows. F(1)F(0) ATP synthase produces ATP from ADP in the presence of a proton or sodium gradient. F-type ATPases consist of two structural domains, F(1) containing the extramembraneous catalytic core and F(0) containing the membrane proton channel, linked together by a central stalk and a peripheral stalk. During catalysis, ATP synthesis in the catalytic domain of F(1) is coupled via a rotary mechanism of the central stalk subunits to proton translocation (Potential). Essential for photosynthesis, probably by facilitating electron transport in both photosystems I and II. In terms of biological role, this protein is part of the stalk that links CF(0) to CF(1). It either transmits conformational changes from CF(0) to CF(1) or is implicated in proton conduction. The polypeptide is ATP synthase subunit delta, chloroplastic (Arabidopsis thaliana (Mouse-ear cress)).